A 426-amino-acid polypeptide reads, in one-letter code: Histidine--tRNA ligase (426 aa).

It belongs to the class-II aminoacyl-tRNA synthetase family.

The protein resides in the cytoplasm. The catalysed reaction is tRNA(His) + L-histidine + ATP = L-histidyl-tRNA(His) + AMP + diphosphate + H(+). The sequence is that of Histidine--tRNA ligase from Saccharolobus islandicus (strain Y.N.15.51 / Yellowstone #2) (Sulfolobus islandicus).